A 184-amino-acid polypeptide reads, in one-letter code: Shikimate kinase (184 aa).

Position 15–20 (15–20) interacts with ATP; sequence GAGKTS. T19 is a binding site for Mg(2+). Substrate-binding residues include D37, R61, and G83. R123 is a binding site for ATP. Substrate is bound at residue R142.

This sequence belongs to the shikimate kinase family. As to quaternary structure, monomer. It depends on Mg(2+) as a cofactor.

The protein localises to the cytoplasm. It catalyses the reaction shikimate + ATP = 3-phosphoshikimate + ADP + H(+). It functions in the pathway metabolic intermediate biosynthesis; chorismate biosynthesis; chorismate from D-erythrose 4-phosphate and phosphoenolpyruvate: step 5/7. Functionally, catalyzes the specific phosphorylation of the 3-hydroxyl group of shikimic acid using ATP as a cosubstrate. This chain is Shikimate kinase, found in Coxiella burnetii (strain CbuK_Q154) (Coxiella burnetii (strain Q154)).